The following is a 268-amino-acid chain: Tryptophan synthase alpha chain (268 aa).

Catalysis depends on proton acceptor residues glutamate 49 and aspartate 60.

It belongs to the TrpA family. In terms of assembly, tetramer of two alpha and two beta chains.

It catalyses the reaction (1S,2R)-1-C-(indol-3-yl)glycerol 3-phosphate + L-serine = D-glyceraldehyde 3-phosphate + L-tryptophan + H2O. It functions in the pathway amino-acid biosynthesis; L-tryptophan biosynthesis; L-tryptophan from chorismate: step 5/5. In terms of biological role, the alpha subunit is responsible for the aldol cleavage of indoleglycerol phosphate to indole and glyceraldehyde 3-phosphate. The protein is Tryptophan synthase alpha chain of Erwinia tasmaniensis (strain DSM 17950 / CFBP 7177 / CIP 109463 / NCPPB 4357 / Et1/99).